Here is a 154-residue protein sequence, read N- to C-terminus: Protein X (154 aa).

The interval 68–117 (PCALRFTSARRMETTVNAHQVLPKVLHKRTLGLSAMSTTDLEAYFKDCLF) is mitochondrial targeting sequence.

Belongs to the orthohepadnavirus protein X family. May form homodimer. May interact with host CEBPA, CFLAR, CREB1, DDB1, E4F1, HBXIP, HSPD1/HSP60, NFKBIA, POLR2E and SMAD4. Interacts with host SMC5-SMC6 complex and induces its degradation. Interacts with host TRPC4AP; leading to prevent ubiquitination of TRPC4AP. Interacts with host PLSCR1; this interaction promotes ubiquitination and degradation of HBx and impairs HBx-mediated cell proliferation. In terms of processing, a fraction may be phosphorylated in insect cells and HepG2 cells, a human hepatoblastoma cell line. Phosphorylated in vitro by host protein kinase C or mitogen-activated protein kinase. N-acetylated in insect cells.

The protein localises to the host cytoplasm. Its subcellular location is the host nucleus. The protein resides in the host mitochondrion. In terms of biological role, multifunctional protein that plays a role in silencing host antiviral defenses and promoting viral transcription. Does not seem to be essential for HBV infection. May be directly involved in development of cirrhosis and liver cancer (hepatocellular carcinoma). Most of cytosolic activities involve modulation of cytosolic calcium. The effect on apoptosis is controversial depending on the cell types in which the studies have been conducted. May induce apoptosis by localizing in mitochondria and causing loss of mitochondrial membrane potential. May also modulate apoptosis by binding host CFLAR, a key regulator of the death-inducing signaling complex (DISC). Promotes viral transcription by using the host E3 ubiquitin ligase DDB1 to target the SMC5-SMC6 complex to proteasomal degradation. This host complex would otherwise bind to viral episomal DNA, and prevents its transcription. Moderately stimulates transcription of many different viral and cellular transcription elements. Promoters and enhancers stimulated by HBx contain DNA binding sites for NF-kappa-B, AP-1, AP-2, c-EBP, ATF/CREB, or the calcium-activated factor NF-AT. The protein is Protein X of Hepatitis B virus genotype C subtype adr (strain Japan/adr4/1983) (HBV-C).